The sequence spans 1112 residues: DNA-directed RNA polymerase subunit beta (1112 aa).

A disordered region spans residues 1087-1112 (VGGRRTPNRPTYENIGGPREMEFSED).

Belongs to the RNA polymerase beta chain family. As to quaternary structure, in cyanobacteria the RNAP catalytic core is composed of 2 alpha, 1 beta, 1 beta', 1 gamma and 1 omega subunit. When a sigma factor is associated with the core the holoenzyme is formed, which can initiate transcription.

It carries out the reaction RNA(n) + a ribonucleoside 5'-triphosphate = RNA(n+1) + diphosphate. In terms of biological role, DNA-dependent RNA polymerase catalyzes the transcription of DNA into RNA using the four ribonucleoside triphosphates as substrates. This Gloeobacter violaceus (strain ATCC 29082 / PCC 7421) protein is DNA-directed RNA polymerase subunit beta.